The chain runs to 194 residues: MAENLAGNDRLIWIDLEMTGLDTDRDSIIEIATIVTDAQLNVLAEGPELAIAHPLETLEAMDEWNRNQHRRSGLWQRVLDSQVTHAQAEAQTVAFLSEWIRAGASPMCGNSICQDRRFLHRQMSRLERYFHYRNLDVSTIKELARRWAPSVANGFAKSSAHTALSDVRDSIDELRHYRQFMGALGGDAAAGVEG.

The Exonuclease domain maps to 11–174 (LIWIDLEMTG…SDVRDSIDEL (164 aa)). Tyr132 is a catalytic residue.

This sequence belongs to the oligoribonuclease family.

It localises to the cytoplasm. 3'-to-5' exoribonuclease specific for small oligoribonucleotides. The polypeptide is Oligoribonuclease (Xanthomonas euvesicatoria pv. vesicatoria (strain 85-10) (Xanthomonas campestris pv. vesicatoria)).